Reading from the N-terminus, the 84-residue chain is Defensin-like protein 49 (84 aa).

The signal sequence occupies residues 1–29; the sequence is MGITKSLMIFFHIVLLAVSLSNNIILTSG. Intrachain disulfides connect Cys40-Cys82, Cys44-Cys68, Cys54-Cys80, and Cys58-Cys81.

Belongs to the DEFL family.

It is found in the secreted. The chain is Defensin-like protein 49 from Arabidopsis thaliana (Mouse-ear cress).